Here is a 225-residue protein sequence, read N- to C-terminus: Uridylate kinase (225 aa).

An ATP-binding site is contributed by 9–10; the sequence is GS. A UMP-binding site is contributed by glycine 44. Glycine 45 and arginine 49 together coordinate ATP. UMP is bound by residues aspartate 66 and 114–120; that span reads THPGHTT. Residues threonine 140, asparagine 141, tyrosine 146, and aspartate 149 each contribute to the ATP site.

This sequence belongs to the UMP kinase family. In terms of assembly, homohexamer.

The protein resides in the cytoplasm. The catalysed reaction is UMP + ATP = UDP + ADP. It functions in the pathway pyrimidine metabolism; CTP biosynthesis via de novo pathway; UDP from UMP (UMPK route): step 1/1. Inhibited by UTP. Its function is as follows. Catalyzes the reversible phosphorylation of UMP to UDP. The protein is Uridylate kinase of Thermococcus kodakarensis (strain ATCC BAA-918 / JCM 12380 / KOD1) (Pyrococcus kodakaraensis (strain KOD1)).